The primary structure comprises 629 residues: 1-deoxy-D-xylulose-5-phosphate synthase (629 aa).

Residues His-72 and 113-115 contribute to the thiamine diphosphate site; that span reads GHS. Mg(2+) is bound at residue Asp-144. Residues 145 to 146, Asn-173, Tyr-284, and Glu-366 each bind thiamine diphosphate; that span reads GA. Mg(2+) is bound at residue Asn-173.

Belongs to the transketolase family. DXPS subfamily. In terms of assembly, homodimer. Requires Mg(2+) as cofactor. Thiamine diphosphate is required as a cofactor.

It catalyses the reaction D-glyceraldehyde 3-phosphate + pyruvate + H(+) = 1-deoxy-D-xylulose 5-phosphate + CO2. It functions in the pathway metabolic intermediate biosynthesis; 1-deoxy-D-xylulose 5-phosphate biosynthesis; 1-deoxy-D-xylulose 5-phosphate from D-glyceraldehyde 3-phosphate and pyruvate: step 1/1. Functionally, catalyzes the acyloin condensation reaction between C atoms 2 and 3 of pyruvate and glyceraldehyde 3-phosphate to yield 1-deoxy-D-xylulose-5-phosphate (DXP). This is 1-deoxy-D-xylulose-5-phosphate synthase from Halalkalibacterium halodurans (strain ATCC BAA-125 / DSM 18197 / FERM 7344 / JCM 9153 / C-125) (Bacillus halodurans).